We begin with the raw amino-acid sequence, 681 residues long: Hydroxyproline O-galactosyltransferase GALT6 (681 aa).

Over 1–28 (MRKPKLSKLERLEKFDIFVSLSKQRSVQ) the chain is Cytoplasmic. Residues 29-49 (ILMAVGLLYMLLITFEIPFVF) form a helical; Signal-anchor for type II membrane protein membrane-spanning segment. Residues 50-681 (KTGLSSLSQD…TGKPQCCNMR (632 aa)) lie on the Lumenal side of the membrane. The interval 57–80 (SQDPLTRPEKHNSQRELQERRAPT) is disordered. The segment covering 62–78 (TRPEKHNSQRELQERRA) has biased composition (basic and acidic residues). A Galectin domain is found at 187–401 (NIMELPCGLT…DIDVHSVFAG (215 aa)). Residue N629 is glycosylated (N-linked (GlcNAc...) asparagine).

Belongs to the glycosyltransferase 31 family. It depends on Mn(2+) as a cofactor. Expressed in junveile leaves and stems, and at lower levels in cauline leaves and siliques.

It is found in the golgi apparatus membrane. Its pathway is protein modification; protein glycosylation. Possesses hydroxyproline O-galactosyltransferase activity. Transfers galactose from UDP-galactose to hydroxyproline residues in the arabinogalactan proteins (AGPs). Is specific for AGPs containing non-contiguous peptidyl hydroxyproline residues. Utilizes UDP-galactose solely as sugar donor. The addition of galactose onto the peptidyl hydroxyproline residues in AGP core proteins represents the first committed step in arabinogalactan polysaccharide addition. AGP glycans play essential roles in both vegetative and reproductive plant growth. The polypeptide is Hydroxyproline O-galactosyltransferase GALT6 (Arabidopsis thaliana (Mouse-ear cress)).